The sequence spans 277 residues: MEMO1 family protein CTN_0605 (277 aa).

It belongs to the MEMO1 family.

The protein is MEMO1 family protein CTN_0605 of Thermotoga neapolitana (strain ATCC 49049 / DSM 4359 / NBRC 107923 / NS-E).